Reading from the N-terminus, the 534-residue chain is CTP synthase (534 aa).

The interval 1–266 (MKTKFLFITG…DERIIDYLNI (266 aa)) is amidoligase domain. Ser14 is a binding site for CTP. Residue Ser14 coordinates UTP. ATP-binding positions include 15 to 20 (SLGKGL) and Asp72. Mg(2+) contacts are provided by Asp72 and Glu140. CTP is bound by residues 147 to 149 (DIE), 187 to 192 (KTKPTQ), and Lys223. UTP is bound by residues 187 to 192 (KTKPTQ) and Lys223. An ATP-binding site is contributed by 239 to 241 (RDV). Positions 291–533 (TIAIVGKYVE…VGASLKHHGE (243 aa)) constitute a Glutamine amidotransferase type-1 domain. Gly353 serves as a coordination point for L-glutamine. Catalysis depends on Cys380, which acts as the Nucleophile; for glutamine hydrolysis. L-glutamine-binding positions include 381–384 (LGMQ), Glu404, and Arg461. Residues His506 and Glu508 contribute to the active site.

This sequence belongs to the CTP synthase family. In terms of assembly, homotetramer.

It carries out the reaction UTP + L-glutamine + ATP + H2O = CTP + L-glutamate + ADP + phosphate + 2 H(+). The catalysed reaction is L-glutamine + H2O = L-glutamate + NH4(+). The enzyme catalyses UTP + NH4(+) + ATP = CTP + ADP + phosphate + 2 H(+). It functions in the pathway pyrimidine metabolism; CTP biosynthesis via de novo pathway; CTP from UDP: step 2/2. With respect to regulation, allosterically activated by GTP, when glutamine is the substrate; GTP has no effect on the reaction when ammonia is the substrate. The allosteric effector GTP functions by stabilizing the protein conformation that binds the tetrahedral intermediate(s) formed during glutamine hydrolysis. Inhibited by the product CTP, via allosteric rather than competitive inhibition. Catalyzes the ATP-dependent amination of UTP to CTP with either L-glutamine or ammonia as the source of nitrogen. Regulates intracellular CTP levels through interactions with the four ribonucleotide triphosphates. This Syntrophotalea carbinolica (strain DSM 2380 / NBRC 103641 / GraBd1) (Pelobacter carbinolicus) protein is CTP synthase.